The primary structure comprises 129 residues: UPF0325 protein SG1947 (129 aa).

This sequence belongs to the UPF0325 family.

The sequence is that of UPF0325 protein SG1947 from Sodalis glossinidius (strain morsitans).